We begin with the raw amino-acid sequence, 232 residues long: 2,3-bisphosphoglycerate-dependent phosphoglycerate mutase (232 aa).

Substrate-binding positions include R10–N17, T23–G24, R62, E89–Y92, K100, R116–R117, and G186–N187. H11 functions as the Tele-phosphohistidine intermediate in the catalytic mechanism. The active-site Proton donor/acceptor is the E89.

The protein belongs to the phosphoglycerate mutase family. BPG-dependent PGAM subfamily. Homodimer.

The enzyme catalyses (2R)-2-phosphoglycerate = (2R)-3-phosphoglycerate. Its pathway is carbohydrate degradation; glycolysis; pyruvate from D-glyceraldehyde 3-phosphate: step 3/5. In terms of biological role, catalyzes the interconversion of 2-phosphoglycerate and 3-phosphoglycerate. This is 2,3-bisphosphoglycerate-dependent phosphoglycerate mutase from Blochmanniella pennsylvanica (strain BPEN).